The primary structure comprises 316 residues: tRNA(Ile)-lysidine synthase (316 aa).

Residue 33 to 38 (SGGTDS) participates in ATP binding.

Belongs to the tRNA(Ile)-lysidine synthase family.

The protein resides in the cytoplasm. It catalyses the reaction cytidine(34) in tRNA(Ile2) + L-lysine + ATP = lysidine(34) in tRNA(Ile2) + AMP + diphosphate + H(+). In terms of biological role, ligates lysine onto the cytidine present at position 34 of the AUA codon-specific tRNA(Ile) that contains the anticodon CAU, in an ATP-dependent manner. Cytidine is converted to lysidine, thus changing the amino acid specificity of the tRNA from methionine to isoleucine. The protein is tRNA(Ile)-lysidine synthase of Bdellovibrio bacteriovorus (strain ATCC 15356 / DSM 50701 / NCIMB 9529 / HD100).